Here is a 158-residue protein sequence, read N- to C-terminus: MIEKVPMTRGGHAALADELKKRQSVDRPRIIEHIAEARSHGDLSENAEYHAAKEDQSHNEGRIAELEDKLARAEIIDVSKLSGDTIKFGATVTLIDEDTDKKAVWQIVGEAEADAKKGRISITSPLARALIGKKKGASVEVVAPGGAKAYEITKVEWR.

Positions 41-61 (GDLSENAEYHAAKEDQSHNEG) are disordered. The stretch at 51–74 (AAKEDQSHNEGRIAELEDKLARAE) forms a coiled coil.

The protein belongs to the GreA/GreB family.

Necessary for efficient RNA polymerase transcription elongation past template-encoded arresting sites. The arresting sites in DNA have the property of trapping a certain fraction of elongating RNA polymerases that pass through, resulting in locked ternary complexes. Cleavage of the nascent transcript by cleavage factors such as GreA or GreB allows the resumption of elongation from the new 3'terminus. GreA releases sequences of 2 to 3 nucleotides. In Nitrobacter hamburgensis (strain DSM 10229 / NCIMB 13809 / X14), this protein is Transcription elongation factor GreA.